A 486-amino-acid chain; its full sequence is ATP synthase subunit beta (486 aa).

An ATP-binding site is contributed by 164-171; the sequence is GGAGVGKT.

The protein belongs to the ATPase alpha/beta chains family. In terms of assembly, F-type ATPases have 2 components, CF(1) - the catalytic core - and CF(0) - the membrane proton channel. CF(1) has five subunits: alpha(3), beta(3), gamma(1), delta(1), epsilon(1). CF(0) has four main subunits: a(1), b(1), b'(1) and c(9-12).

It localises to the cellular thylakoid membrane. It catalyses the reaction ATP + H2O + 4 H(+)(in) = ADP + phosphate + 5 H(+)(out). Produces ATP from ADP in the presence of a proton gradient across the membrane. The catalytic sites are hosted primarily by the beta subunits. This chain is ATP synthase subunit beta, found in Prochlorococcus marinus (strain MIT 9515).